A 626-amino-acid polypeptide reads, in one-letter code: Interferon-induced GTP-binding protein MxC (626 aa).

The Dynamin-type G domain maps to D40–P313. The segment at G50–S57 is G1 motif. GTP is bound at residue G50–S57. Residues V75–R77 are G2 motif. The segment at D151–G154 is G3 motif. GTP is bound by residues D151–I155 and T220–D223. The G4 motif stretch occupies residues T220–D223. The tract at residues K252–G255 is G5 motif. A GED domain is found at L534–N624.

It belongs to the TRAFAC class dynamin-like GTPase superfamily. Dynamin/Fzo/YdjA family.

It localises to the cytoplasm. This is Interferon-induced GTP-binding protein MxC (mxc) from Danio rerio (Zebrafish).